The sequence spans 920 residues: Protein translocase subunit SecA 2 (920 aa).

ATP-binding positions include Gln-91, 109 to 113 (GEGKT), and Asp-527. The segment covering 859–870 (GEGSALDRRPTD) has biased composition (basic and acidic residues). A disordered region spans residues 859 to 920 (GEGSALDRRP…KSRNRRRRKR (62 aa)). The segment covering 906–920 (PHRPGKSRNRRRRKR) has biased composition (basic residues).

This sequence belongs to the SecA family. In terms of assembly, monomer and homodimer. Part of the essential Sec protein translocation apparatus which comprises SecA, SecYEG and auxiliary proteins SecDF. Other proteins may also be involved.

Its subcellular location is the cell membrane. The protein localises to the cytoplasm. It carries out the reaction ATP + H2O + cellular proteinSide 1 = ADP + phosphate + cellular proteinSide 2.. Part of the Sec protein translocase complex. Interacts with the SecYEG preprotein conducting channel. Has a central role in coupling the hydrolysis of ATP to the transfer of proteins into and across the cell membrane, serving as an ATP-driven molecular motor driving the stepwise translocation of polypeptide chains across the membrane. This chain is Protein translocase subunit SecA 2, found in Streptomyces avermitilis (strain ATCC 31267 / DSM 46492 / JCM 5070 / NBRC 14893 / NCIMB 12804 / NRRL 8165 / MA-4680).